The chain runs to 249 residues: Cell division protein DivIB (249 aa).

Residues 1–19 (MKEENEYIVKRRKKRRRKR) lie on the Cytoplasmic side of the membrane. A helical transmembrane segment spans residues 20 to 40 (ITIFLFLLICILVTLCLKLPY). The 69-residue stretch at 41-109 (FNIKYINVEG…NTIDIIVKER (69 aa)) folds into the POTRA domain. Residues 41–249 (FNIKYINVEG…KGNPVYSLQQ (209 aa)) lie on the Extracellular side of the membrane.

This sequence belongs to the FtsQ/DivIB family. DivIB subfamily.

It localises to the cell membrane. Its function is as follows. Cell division protein that may be involved in stabilizing or promoting the assembly of the division complex. In Clostridium acetobutylicum (strain ATCC 824 / DSM 792 / JCM 1419 / IAM 19013 / LMG 5710 / NBRC 13948 / NRRL B-527 / VKM B-1787 / 2291 / W), this protein is Cell division protein DivIB.